The chain runs to 211 residues: Large ribosomal subunit protein uL3 (211 aa).

Glutamine 151 is subject to N5-methylglutamine.

This sequence belongs to the universal ribosomal protein uL3 family. In terms of assembly, part of the 50S ribosomal subunit. Forms a cluster with proteins L14 and L19. Post-translationally, methylated by PrmB.

One of the primary rRNA binding proteins, it binds directly near the 3'-end of the 23S rRNA, where it nucleates assembly of the 50S subunit. The sequence is that of Large ribosomal subunit protein uL3 from Francisella tularensis subsp. tularensis (strain FSC 198).